The chain runs to 379 residues: Tubby-like F-box protein 7 (379 aa).

Over residues 18–28 (FHQGETTTAPE) the composition is skewed to polar residues. Positions 18–41 (FHQGETTTAPESESIPPPSNMAGS) are disordered. Residues 42–97 (SSWSAMLPELLGEIIRRVEETEDRWPQRRDVVTCACVSKKWREITHDFARSSLNSG) form the F-box domain. Disordered stretches follow at residues 193–212 (SQPPHNGAKPSNGKASRRFA) and 248–278 (TLRCPSPSPSSSSAGLSSDQKPCDVTKIMKK).

Belongs to the TUB family. In terms of tissue distribution, ubiquitous.

This chain is Tubby-like F-box protein 7, found in Arabidopsis thaliana (Mouse-ear cress).